Reading from the N-terminus, the 148-residue chain is MLKVKIVRLNKQAFLPVYATAHAAGMDVSACLEEPVVVEPFSTALIPAGFAIELPIGYEMQLRPRSGLALRSMITLANSPATIDADYRGEVKVILINHGPQPFTVNNGDRIAQMVVARVEEVSFEEVSELGETVRGDGGFGHTGTVRS.

Substrate contacts are provided by residues 65–67 (RSG), N78, 82–84 (TID), and K92.

This sequence belongs to the dUTPase family. It depends on Mg(2+) as a cofactor.

It catalyses the reaction dUTP + H2O = dUMP + diphosphate + H(+). Its pathway is pyrimidine metabolism; dUMP biosynthesis; dUMP from dCTP (dUTP route): step 2/2. This enzyme is involved in nucleotide metabolism: it produces dUMP, the immediate precursor of thymidine nucleotides and it decreases the intracellular concentration of dUTP so that uracil cannot be incorporated into DNA. The polypeptide is Deoxyuridine 5'-triphosphate nucleotidohydrolase (Chlorobium phaeovibrioides (strain DSM 265 / 1930) (Prosthecochloris vibrioformis (strain DSM 265))).